A 103-amino-acid polypeptide reads, in one-letter code: Cell division protein FtsB (103 aa).

Topologically, residues 1–3 (MGK) are cytoplasmic. The helical transmembrane segment at 4–21 (LTLLLLALLVWLQYSLWF) threads the bilayer. At 22 to 103 (GKNGIHDYSR…RAQTAGQNNR (82 aa)) the chain is on the periplasmic side. A coiled-coil region spans residues 33-62 (NDDVVAQQATNAKLKARNDQLFAEIDDLNG).

This sequence belongs to the FtsB family. In terms of assembly, part of a complex composed of FtsB, FtsL and FtsQ.

It localises to the cell inner membrane. Functionally, essential cell division protein. May link together the upstream cell division proteins, which are predominantly cytoplasmic, with the downstream cell division proteins, which are predominantly periplasmic. This chain is Cell division protein FtsB, found in Salmonella arizonae (strain ATCC BAA-731 / CDC346-86 / RSK2980).